We begin with the raw amino-acid sequence, 106 residues long: Protein translation factor SUI1 homolog (106 aa).

The protein belongs to the SUI1 family.

Its function is as follows. Additional factor that functions in concert with eIF-2 and the initiator tRNA in directing the ribosome to the proper start site of translation. The sequence is that of Protein translation factor SUI1 homolog from Acanthamoeba polyphaga mimivirus (APMV).